We begin with the raw amino-acid sequence, 191 residues long: Holliday junction branch migration complex subunit RuvA (191 aa).

A domain I region spans residues 1–64 (MIGRLTGTLA…EDAQLLYGFL (64 aa)). Residues 65 to 138 (TATERATFRQ…KGKLGPDLAL (74 aa)) form a domain II region. Residues 138-142 (LPGAV) are flexible linker. Residues 143-191 (IRNEAQSDIVQALIALGYNEREAAAAIKPLPADVGVSDGIKLALRALGK) are domain III.

Belongs to the RuvA family. Homotetramer. Forms an RuvA(8)-RuvB(12)-Holliday junction (HJ) complex. HJ DNA is sandwiched between 2 RuvA tetramers; dsDNA enters through RuvA and exits via RuvB. An RuvB hexamer assembles on each DNA strand where it exits the tetramer. Each RuvB hexamer is contacted by two RuvA subunits (via domain III) on 2 adjacent RuvB subunits; this complex drives branch migration. In the full resolvosome a probable DNA-RuvA(4)-RuvB(12)-RuvC(2) complex forms which resolves the HJ.

The protein localises to the cytoplasm. The RuvA-RuvB-RuvC complex processes Holliday junction (HJ) DNA during genetic recombination and DNA repair, while the RuvA-RuvB complex plays an important role in the rescue of blocked DNA replication forks via replication fork reversal (RFR). RuvA specifically binds to HJ cruciform DNA, conferring on it an open structure. The RuvB hexamer acts as an ATP-dependent pump, pulling dsDNA into and through the RuvAB complex. HJ branch migration allows RuvC to scan DNA until it finds its consensus sequence, where it cleaves and resolves the cruciform DNA. The protein is Holliday junction branch migration complex subunit RuvA of Leptothrix cholodnii (strain ATCC 51168 / LMG 8142 / SP-6) (Leptothrix discophora (strain SP-6)).